The primary structure comprises 1091 residues: Sodium/potassium exporting P-type ATPase 2 (1091 aa).

Residues 1–63 (MSEGTVKENN…LGDDTKIDYK (63 aa)) lie on the Cytoplasmic side of the membrane. A helical membrane pass occupies residues 64–84 (AMVLHQVCNAMIMVLVISMAI). The Extracellular segment spans residues 85-90 (SFAVRD). A helical membrane pass occupies residues 91-111 (WITGGVISFVIAVNVLIGLVQ). Over 112 to 282 (EYKATKTMNS…TNVGTPLHRK (171 aa)) the chain is Cytoplasmic. The chain crosses the membrane as a helical span at residues 283 to 303 (LSKLAVLLFWIAVLFAIIVMA). Over 304–312 (SQKFDVDKR) the chain is Extracellular. Residues 313-333 (VAIYAICVALSMIPSSLVVVL) traverse the membrane as a helical segment. The Cytoplasmic portion of the chain corresponds to 334–815 (TITMSVGAAV…RRMTDNIQKF (482 aa)). Catalysis depends on Asp-369, which acts as the 4-aspartylphosphate intermediate. Residues Asp-369 and Thr-371 each contribute to the Mg(2+) site. Thr-371 and Glu-483 together coordinate ATP. Residues 499-525 (ALTGEKSTNQSNENDQSSLSQHNEKPG) are disordered. Residues 503-519 (EKSTNQSNENDQSSLSQ) are compositionally biased toward polar residues. ATP contacts are provided by Lys-561, Arg-606, Thr-673, Gly-674, Asp-675, Arg-732, and Lys-738. Asp-757 is a binding site for Mg(2+). ATP is bound at residue Asn-760. Residues 816 to 836 (VLQLLAENVAQALYLIIGLVF) form a helical membrane-spanning segment. Over 837–848 (RDENGKSVFPLS) the chain is Extracellular. Residues 849-869 (PVEVLWIIVVTSCFPAMGLGL) traverse the membrane as a helical segment. Residues 870-885 (EKAAPDLMDRPPHDSE) lie on the Cytoplasmic side of the membrane. Residues 886-906 (VGIFTWEVIIDTFAYGIIMTG) form a helical membrane-spanning segment. Topologically, residues 907–943 (SCMASFTGSLYGINSGRLGHDCDGTYNSSCRDVYRSR) are extracellular. A helical membrane pass occupies residues 944 to 964 (SAAFATMTWCALILAWEVVDM). The Cytoplasmic portion of the chain corresponds to 965-991 (RRSFFRMHPDTDSPVKEFFRSIWGNQF). The helical transmembrane segment at 992–1012 (LFWSIIFGFVSAFPVVYIPVI) threads the bilayer. Topologically, residues 1013–1021 (NDKVFLHKP) are extracellular. Residues 1022-1042 (IGAEWGLAIAFTIAFWIGAEL) form a helical membrane-spanning segment. Over 1043–1091 (YKCGKRRYFKTQRAHNPENDLESNNKRDPFEAYSTSTTIHTEVNIGIKQ) the chain is Cytoplasmic.

Belongs to the cation transport ATPase (P-type) (TC 3.A.3) family. Type IID subfamily. It depends on Mg(2+) as a cofactor. Post-translationally, the active site is phosphorylated in presence of sodium or potassium and in conditions of higher pH. Not phosphorylated in presence of calcium ions.

Its subcellular location is the cell membrane. It carries out the reaction Na(+)(in) + ATP + H2O = Na(+)(out) + ADP + phosphate + H(+). The catalysed reaction is K(+)(in) + ATP + H2O = K(+)(out) + ADP + phosphate + H(+). Functionally, catalyzes the hydrolysis of ATP coupled with the export of sodium and potassium from the cell. May export potassium less efficiently. May transport other cations such as lithium. Sodium/potassium efflux ATPases are involved in salt tolerance and maintaining the membrane potential across the plasma membrane in high salinity (Na+) or alkaline (K+) environments. This Saccharomyces cerevisiae (strain ATCC 204508 / S288c) (Baker's yeast) protein is Sodium/potassium exporting P-type ATPase 2.